The primary structure comprises 602 residues: Elongation factor 4 (602 aa).

Residues 7–189 (SKIRNFCIIA…AVVSRIPHPQ (183 aa)) enclose the tr-type G domain. Residues 19-24 (DHGKST) and 136-139 (NKVD) each bind GTP.

The protein belongs to the TRAFAC class translation factor GTPase superfamily. Classic translation factor GTPase family. LepA subfamily.

The protein localises to the cell inner membrane. The catalysed reaction is GTP + H2O = GDP + phosphate + H(+). In terms of biological role, required for accurate and efficient protein synthesis under certain stress conditions. May act as a fidelity factor of the translation reaction, by catalyzing a one-codon backward translocation of tRNAs on improperly translocated ribosomes. Back-translocation proceeds from a post-translocation (POST) complex to a pre-translocation (PRE) complex, thus giving elongation factor G a second chance to translocate the tRNAs correctly. Binds to ribosomes in a GTP-dependent manner. This Prochlorococcus marinus subsp. pastoris (strain CCMP1986 / NIES-2087 / MED4) protein is Elongation factor 4.